We begin with the raw amino-acid sequence, 349 residues long: Methylthioribose-1-phosphate isomerase (349 aa).

Substrate contacts are provided by residues 51 to 53 (RGA), R94, and Q199. D240 functions as the Proton donor in the catalytic mechanism. 250–251 (NK) provides a ligand contact to substrate.

This sequence belongs to the eIF-2B alpha/beta/delta subunits family. MtnA subfamily. Homodimer.

The enzyme catalyses 5-(methylsulfanyl)-alpha-D-ribose 1-phosphate = 5-(methylsulfanyl)-D-ribulose 1-phosphate. It participates in amino-acid biosynthesis; L-methionine biosynthesis via salvage pathway; L-methionine from S-methyl-5-thio-alpha-D-ribose 1-phosphate: step 1/6. Its function is as follows. Catalyzes the interconversion of methylthioribose-1-phosphate (MTR-1-P) into methylthioribulose-1-phosphate (MTRu-1-P). This Bacillus cytotoxicus (strain DSM 22905 / CIP 110041 / 391-98 / NVH 391-98) protein is Methylthioribose-1-phosphate isomerase.